A 261-amino-acid polypeptide reads, in one-letter code: ATP synthase subunit a (261 aa).

5 helical membrane-spanning segments follow: residues 28-48 (AVHL…LTIF), 89-109 (IAPL…MDWV), 140-160 (NITF…SIKV), 203-223 (LFGN…IGVF), and 229-249 (FLWA…FMML).

This sequence belongs to the ATPase A chain family. In terms of assembly, F-type ATPases have 2 components, CF(1) - the catalytic core - and CF(0) - the membrane proton channel. CF(1) has five subunits: alpha(3), beta(3), gamma(1), delta(1), epsilon(1). CF(0) has three main subunits: a(1), b(2) and c(9-12). The alpha and beta chains form an alternating ring which encloses part of the gamma chain. CF(1) is attached to CF(0) by a central stalk formed by the gamma and epsilon chains, while a peripheral stalk is formed by the delta and b chains.

It is found in the cell inner membrane. Its function is as follows. Key component of the proton channel; it plays a direct role in the translocation of protons across the membrane. This chain is ATP synthase subunit a, found in Colwellia psychrerythraea (strain 34H / ATCC BAA-681) (Vibrio psychroerythus).